Reading from the N-terminus, the 265-residue chain is Cell division protein DivIB (265 aa).

At 1-30 the chain is on the cytoplasmic side; sequence MKNSKVIKLQDRVPKLKNQQKKKKKNVNHR. The chain crosses the membrane as a helical span at residues 31-51; it reads LILYISILFLLVLFLIYFRSP. Over 52-265 the chain is Extracellular; it reads LSNIKKISVF…NRMIVFNTLS (214 aa). The POTRA domain maps to 53–121; the sequence is SNIKKISVFG…NKIDVHIEEY (69 aa).

It belongs to the FtsQ/DivIB family. DivIB subfamily.

Its subcellular location is the cell membrane. In terms of biological role, cell division protein that may be involved in stabilizing or promoting the assembly of the division complex. The polypeptide is Cell division protein DivIB (Bacillus anthracis).